The following is a 208-amino-acid chain: Small ribosomal subunit protein uS4 (208 aa).

Residues G24–E52 are disordered. Residues S98–A160 form the S4 RNA-binding domain.

It belongs to the universal ribosomal protein uS4 family. As to quaternary structure, part of the 30S ribosomal subunit. Contacts protein S5. The interaction surface between S4 and S5 is involved in control of translational fidelity.

Functionally, one of the primary rRNA binding proteins, it binds directly to 16S rRNA where it nucleates assembly of the body of the 30S subunit. In terms of biological role, with S5 and S12 plays an important role in translational accuracy. This chain is Small ribosomal subunit protein uS4, found in Acinetobacter baumannii (strain ATCC 17978 / DSM 105126 / CIP 53.77 / LMG 1025 / NCDC KC755 / 5377).